We begin with the raw amino-acid sequence, 211 residues long: Large ribosomal subunit protein bL25 (211 aa).

Positions 1 to 18 (MAKTHEIKAERRADEGKG) are enriched in basic and acidic residues. The interval 1–20 (MAKTHEIKAERRADEGKGAS) is disordered.

This sequence belongs to the bacterial ribosomal protein bL25 family. CTC subfamily. Part of the 50S ribosomal subunit; part of the 5S rRNA/L5/L18/L25 subcomplex. Contacts the 5S rRNA. Binds to the 5S rRNA independently of L5 and L18.

In terms of biological role, this is one of the proteins that binds to the 5S RNA in the ribosome where it forms part of the central protuberance. The chain is Large ribosomal subunit protein bL25 from Xanthomonas oryzae pv. oryzae (strain MAFF 311018).